Reading from the N-terminus, the 135-residue chain is Galectin-1 (135 aa).

Residue Ala-2 is modified to N-acetylalanine. The 132-residue stretch at Gly-4 to Asp-135 folds into the Galectin domain. 2 positions are modified to N6-acetyllysine: Lys-13 and Lys-29. Ser-30 carries the phosphoserine modification. Residues His-45–Arg-49, His-53, Asn-62, and Trp-69–Glu-72 each bind a beta-D-galactoside. Lys-108 carries the N6-acetyllysine; alternate modification. Lys-108 is subject to N6-succinyllysine; alternate. N6-acetyllysine is present on Lys-128.

As to quaternary structure, homodimer. Binds LGALS3BP. Interacts with CD2, CD3, CD4, CD6, CD7, CD43, ALCAM and CD45. Interacts with laminin (via poly-N-acetyllactosamine). Interacts with SUSD2.

Its subcellular location is the secreted. The protein localises to the extracellular space. It is found in the extracellular matrix. In terms of biological role, lectin that binds beta-galactoside and a wide array of complex carbohydrates. Plays a role in regulating apoptosis, cell proliferation and cell differentiation. Inhibits CD45 protein phosphatase activity and therefore the dephosphorylation of Lyn kinase. Strong inducer of T-cell apoptosis. This is Galectin-1 (LGALS1) from Pongo abelii (Sumatran orangutan).